Reading from the N-terminus, the 306-residue chain is Methionyl-tRNA formyltransferase (306 aa).

(6S)-5,6,7,8-tetrahydrofolate is bound at residue 110–113 (SLLP).

The protein belongs to the Fmt family.

It carries out the reaction L-methionyl-tRNA(fMet) + (6R)-10-formyltetrahydrofolate = N-formyl-L-methionyl-tRNA(fMet) + (6S)-5,6,7,8-tetrahydrofolate + H(+). In terms of biological role, attaches a formyl group to the free amino group of methionyl-tRNA(fMet). The formyl group appears to play a dual role in the initiator identity of N-formylmethionyl-tRNA by promoting its recognition by IF2 and preventing the misappropriation of this tRNA by the elongation apparatus. This Brucella melitensis biotype 2 (strain ATCC 23457) protein is Methionyl-tRNA formyltransferase.